We begin with the raw amino-acid sequence, 228 residues long: MTQQEIKLIAFDLDGTLLDSVPDLAVAADQATRAVGFPGVTELQVRDYVGNGADILIGRALSQSLTINPELSDELRAQARELFDDFYQQTGHKLSHLYPTVKETLKALHQAGFTLALVTNKPSKFVPDVLQQHGIADYFVDVLGGDSFPEKKPNPIALNWLMEKHQIQPTEMLMVGDSKNDILAAKNAGCASFGLTYGYNHGEPISASEPDFVADSLAQLLDVVLVSA.

The active-site Nucleophile is the aspartate 12. Aspartate 12, aspartate 14, and aspartate 177 together coordinate Mg(2+).

This sequence belongs to the HAD-like hydrolase superfamily. CbbY/CbbZ/Gph/YieH family. Mg(2+) serves as cofactor.

It carries out the reaction 2-phosphoglycolate + H2O = glycolate + phosphate. It participates in organic acid metabolism; glycolate biosynthesis; glycolate from 2-phosphoglycolate: step 1/1. Specifically catalyzes the dephosphorylation of 2-phosphoglycolate. Is involved in the dissimilation of the intracellular 2-phosphoglycolate formed during the DNA repair of 3'-phosphoglycolate ends, a major class of DNA lesions induced by oxidative stress. The polypeptide is Phosphoglycolate phosphatase (Vibrio vulnificus (strain YJ016)).